The sequence spans 424 residues: MAKNIQAIRGMNDYLPSETAIWQRIEGTLKNVLGSYGYSEIRLPIVEQTPLFKRAIGEVTDVVEKEMYTFEDRNGDSLTLRPEGTAGCVRAGIEHGLLYNQEQHLWYIGPMFRHERPQKGRYRQFHQLGCEVFGLQGPDIDAELIMLTARWWRALGISEHVTLELNSIGSLEARANYRDALVAFLEQHKEKLDEDCKRRMYTSPLRVLDSKNPEVQALLNDAPALGDYLDEESREHFAGLCKLLESAGIAYTVNQRLVRGLDYYNRTVFEWVTNSLGSQGTVCAGGRYDGLVEQLGGRATPAVGFAMGLERLVLLVQAVNPEFKADPVVDIYLVASGADTQSAAMALAERLRDELPGVKLMTNHGGGNFKKQFARADKWGARVAVVLGESEVANGTAVVKDLRSGEQTAVAQDSVAAHLRTLLG.

It belongs to the class-II aminoacyl-tRNA synthetase family. As to quaternary structure, homodimer.

It is found in the cytoplasm. The enzyme catalyses tRNA(His) + L-histidine + ATP = L-histidyl-tRNA(His) + AMP + diphosphate + H(+). The sequence is that of Histidine--tRNA ligase from Shigella dysenteriae serotype 1 (strain Sd197).